We begin with the raw amino-acid sequence, 100 residues long: MKHITNKAELDQLLSTNKKVVVDFYANWCGPCKILGPIFEEVAQDKKDWTFVKVDVDQANEISSEYEIRSIPTVIFFQDGKMADKRIGFIPKNELKELLK.

The region spanning 1–100 (MKHITNKAEL…PKNELKELLK (100 aa)) is the Thioredoxin domain. The cysteines at positions 29 and 32 are disulfide-linked.

The protein belongs to the thioredoxin family.

Functionally, participates in various redox reactions through the reversible oxidation of its active center dithiol to a disulfide and catalyzes dithiol-disulfide exchange reactions. This chain is Thioredoxin (trxA), found in Mycoplasmoides gallisepticum (strain R(low / passage 15 / clone 2)) (Mycoplasma gallisepticum).